A 360-amino-acid chain; its full sequence is Histidinol-phosphate aminotransferase (360 aa).

N6-(pyridoxal phosphate)lysine is present on Lys208.

It belongs to the class-II pyridoxal-phosphate-dependent aminotransferase family. Histidinol-phosphate aminotransferase subfamily. Homodimer. Pyridoxal 5'-phosphate is required as a cofactor.

The enzyme catalyses L-histidinol phosphate + 2-oxoglutarate = 3-(imidazol-4-yl)-2-oxopropyl phosphate + L-glutamate. It participates in amino-acid biosynthesis; L-histidine biosynthesis; L-histidine from 5-phospho-alpha-D-ribose 1-diphosphate: step 7/9. In Lactococcus lactis subsp. lactis (strain IL1403) (Streptococcus lactis), this protein is Histidinol-phosphate aminotransferase (hisC).